The chain runs to 257 residues: MMMQQQITGTEHGWWIISNENRIWLPKGELPFGMATQWSLQGKIALPIGEWQGEKVWLIRQKMVSNMVSLRQIVASDRGLFQLAGRGVQLAEFYRSHQYCGYCGNEMHHSVSEWACLCHHCHERYYPQIAPCIIVGIRRDDHILLAQHQHHRGGVYTVLAGFVEVGETLEEAVVREVMEESNIKIRNLRYVASQPWPFPHSLMMAFLADYDSGEIRHDPQELISADWYHYDQLPLIPPHNTIARRLIEDTIVLCRNT.

Substrate is bound by residues lysine 27 and arginine 71. Zn(2+) contacts are provided by cysteine 100 and cysteine 103. Glutamate 113 lines the substrate pocket. Cysteine 118 and cysteine 121 together coordinate Zn(2+). Residue tyrosine 126 coordinates substrate. The 125-residue stretch at 127 to 251 folds into the Nudix hydrolase domain; the sequence is PQIAPCIIVG…IARRLIEDTI (125 aa). 3 residues coordinate a divalent metal cation: alanine 160, glutamate 176, and glutamate 180. Residues 161–182 carry the Nudix box motif; the sequence is GFVEVGETLEEAVVREVMEESN. 194–201 provides a ligand contact to substrate; that stretch reads QPWPFPHS. Residue glutamate 221 participates in a divalent metal cation binding. A substrate-binding site is contributed by alanine 243.

The protein belongs to the Nudix hydrolase family. NudC subfamily. In terms of assembly, homodimer. The cofactor is Mg(2+). Requires Mn(2+) as cofactor. Zn(2+) is required as a cofactor.

The enzyme catalyses a 5'-end NAD(+)-phospho-ribonucleoside in mRNA + H2O = a 5'-end phospho-adenosine-phospho-ribonucleoside in mRNA + beta-nicotinamide D-ribonucleotide + 2 H(+). It catalyses the reaction NAD(+) + H2O = beta-nicotinamide D-ribonucleotide + AMP + 2 H(+). It carries out the reaction NADH + H2O = reduced beta-nicotinamide D-ribonucleotide + AMP + 2 H(+). MRNA decapping enzyme that specifically removes the nicotinamide adenine dinucleotide (NAD) cap from a subset of mRNAs by hydrolyzing the diphosphate linkage to produce nicotinamide mononucleotide (NMN) and 5' monophosphate mRNA. The NAD-cap is present at the 5'-end of some mRNAs and stabilizes RNA against 5'-processing. Has preference for mRNAs with a 5'-end purine. Catalyzes the hydrolysis of a broad range of dinucleotide pyrophosphates. The polypeptide is NAD-capped RNA hydrolase NudC (Photorhabdus laumondii subsp. laumondii (strain DSM 15139 / CIP 105565 / TT01) (Photorhabdus luminescens subsp. laumondii)).